We begin with the raw amino-acid sequence, 474 residues long: ATP-dependent rRNA helicase RRP3 (474 aa).

Positions 1–10 are enriched in basic residues; it reads MPSMKRRKLS. The interval 1-43 is disordered; that stretch reads MPSMKRRKLSHTPPQGEAEDGFSDSETSQASLQETPGNDEKIE. Over residues 24-36 the composition is skewed to polar residues; sequence DSETSQASLQETP. The Q motif signature appears at 48 to 76; it reads KSFKDLGIIDSLCEACDSLGYKAPTQIQA. The Helicase ATP-binding domain occupies 79-250; the sequence is IPLALQGRDL…RASLSNPLRV (172 aa). 92–99 contacts ATP; that stretch reads AETGSGKT. Positions 198 to 201 match the DEAD box motif; that stretch reads DEAD. A Helicase C-terminal domain is found at 278–422; the sequence is YLIYLLNEFP…EYKVEKEEVM (145 aa). Positions 442–474 are disordered; sequence LHENRGKKGATLRNRRIGKGAKRSRDEMDREEG. Basic residues predominate over residues 448–463; the sequence is KKGATLRNRRIGKGAK. Residues 464–474 show a composition bias toward basic and acidic residues; sequence RSRDEMDREEG.

It belongs to the DEAD box helicase family. DDX47/RRP3 subfamily. As to quaternary structure, interacts with the SSU processome.

The protein resides in the nucleus. The enzyme catalyses ATP + H2O = ADP + phosphate + H(+). Its function is as follows. ATP-dependent rRNA helicase required for pre-ribosomal RNA processing. Involved in the maturation of the 35S-pre-rRNA and to its cleavage to mature 18S rRNA. The polypeptide is ATP-dependent rRNA helicase RRP3 (Coccidioides immitis (strain RS) (Valley fever fungus)).